Consider the following 164-residue polypeptide: Peptide deformylase-like (164 aa).

Residue E134 is part of the active site.

This sequence belongs to the polypeptide deformylase family.

This Brucella melitensis biotype 1 (strain ATCC 23456 / CCUG 17765 / NCTC 10094 / 16M) protein is Peptide deformylase-like.